The chain runs to 52 residues: Conotoxin Ac4.3a (52 aa).

Positions 1-11 are excised as a propeptide; it reads SDFRNAAVHER. Pyrrolidone carboxylic acid is present on Gln12. The residue at position 14 (Glu14) is a 4-carboxyglutamate. Residues Thr18 and Thr20 are each glycosylated (O-linked (HexNAc...) threonine). A 4-hydroxyproline mark is found at Pro28, Pro33, and Pro47. Pro47 is subject to Proline amide. A propeptide spanning residues 48–52 is cleaved from the precursor; sequence GRRND.

This sequence belongs to the conotoxin A superfamily. Post-translationally, contains 3 disulfide bonds. In terms of tissue distribution, expressed by the venom duct.

The protein localises to the secreted. Probable neurotoxin with ion channel inhibitor activity. The polypeptide is Conotoxin Ac4.3a (Conus achatinus (Little frog cone)).